Reading from the N-terminus, the 289-residue chain is MSGFSTEERAAPFSLEYRVFLKNEKGQYISPFHDIPIYADKDVFHMVVEVPRWSNAKMEIATKDPLNPIKQDVKKGKLRYVANLFPYKGYIWNYGAIPQTWEDPGHNDKHTGCCGDNDPIDVCEIGSKVCARGEIIGVKVLGILAMIDEGETDWKVIAINVDDPDAANYNDINDVKRLKPGYLEATVDWFRRYKVPDGKPENEFAFNAEFKDKDFAIDIIKSTHDHWKALVTKKTNGKGISCMNTTVSESPFKCDPDAARAIVDALPPPCESACTVPTDVDKWFHHQKN.

Ser2 carries the post-translational modification N-acetylserine. Lys57 bears the N6-acetyllysine mark. Residues Asp116, Asp121, and Asp153 each contribute to the Mg(2+) site. Lys228 is modified (N6-acetyllysine). Ser250 carries the phosphoserine modification.

Belongs to the PPase family. In terms of assembly, homodimer. Mg(2+) serves as cofactor.

Its subcellular location is the cytoplasm. It carries out the reaction diphosphate + H2O = 2 phosphate + H(+). This chain is Inorganic pyrophosphatase (PPA1), found in Macaca fascicularis (Crab-eating macaque).